A 129-amino-acid chain; its full sequence is MVAEAGASIQAEDVNNDPFRVDQLILDYDYMLYRIKDHVASIHLATTELCRKQNQLVCTGIVEEIIDSNIKNVRELLTKCKELETYFEQLHAIDGIVSTFHERMDEIVKQYRDIKVHTDSASRDHVATK.

This sequence belongs to the BLOC1S4 family. In terms of assembly, component of the biogenesis of lysosome-related organelles complex-1 (BLOC-1).

The protein resides in the cytoplasm. Component of the biogenesis of lysosome-related organelles complex-1 (BLOC-1), a complex that is involved in endosomal cargo sorting. The polypeptide is Biogenesis of lysosome-related organelles complex 1 subunit CNL1 (CLN1) (Eremothecium gossypii (strain ATCC 10895 / CBS 109.51 / FGSC 9923 / NRRL Y-1056) (Yeast)).